Consider the following 293-residue polypeptide: 4-diphosphocytidyl-2-C-methyl-D-erythritol kinase (293 aa).

K16 is a catalytic residue. Residue 99-109 (PMGAGLGGGSS) participates in ATP binding. D141 is a catalytic residue.

Belongs to the GHMP kinase family. IspE subfamily.

It carries out the reaction 4-CDP-2-C-methyl-D-erythritol + ATP = 4-CDP-2-C-methyl-D-erythritol 2-phosphate + ADP + H(+). The protein operates within isoprenoid biosynthesis; isopentenyl diphosphate biosynthesis via DXP pathway; isopentenyl diphosphate from 1-deoxy-D-xylulose 5-phosphate: step 3/6. Its function is as follows. Catalyzes the phosphorylation of the position 2 hydroxy group of 4-diphosphocytidyl-2C-methyl-D-erythritol. In Paraburkholderia xenovorans (strain LB400), this protein is 4-diphosphocytidyl-2-C-methyl-D-erythritol kinase.